Here is a 290-residue protein sequence, read N- to C-terminus: ATP synthase gamma chain (290 aa).

Belongs to the ATPase gamma chain family. In terms of assembly, F-type ATPases have 2 components, CF(1) - the catalytic core - and CF(0) - the membrane proton channel. CF(1) has five subunits: alpha(3), beta(3), gamma(1), delta(1), epsilon(1). CF(0) has three main subunits: a, b and c.

The protein localises to the cell membrane. Produces ATP from ADP in the presence of a proton gradient across the membrane. The gamma chain is believed to be important in regulating ATPase activity and the flow of protons through the CF(0) complex. This chain is ATP synthase gamma chain, found in Buchnera aphidicola subsp. Diuraphis noxia.